The chain runs to 255 residues: Complement C1q-like protein 3 (255 aa).

An N-terminal signal peptide occupies residues 1-20 (MVLLLVILIPVLVSSAGTSA). The segment at 39 to 109 (KAPSTAATPD…GLPGPPGAPG (71 aa)) is disordered. Residues 61–111 (GPKGEAGRPGKAGPRGPPGEPGPPGPVGPPGEKGEPGRQGLPGPPGAPGLN) form the Collagen-like domain. Positions 75–89 (RGPPGEPGPPGPVGP) are enriched in pro residues. Positions 122 to 255 (STVPKIAFYA…TFSGFIIYAD (134 aa)) constitute a C1q domain.

As to quaternary structure, forms homooligomers. Interacts with ADGRB3. Forms heterooligomers with C1QL2 and C1QL4, when proteins are coexpressed; this interaction does not occur after secretion. As to expression, highly expressed in brain and white adipose tissue. In gonadal fat pad, expressed at lower levels in adipocytes than in the stromal vascular fraction (VSP), which contains preadipocytes, fibroblasts, endothelial cells and occasional immune cells. Expression exhibits sexually dimorphism, with higher levels in females than in males (at protein level). Tends to be up-regulated in adipose tissue from obese males, but not females. Expressed in glial cells.

The protein resides in the secreted. Its function is as follows. May regulate the number of excitatory synapses that are formed on hippocampus neurons. Has no effect on inhibitory synapses. Plays a role in glucose homeostasis. Via AMPK signaling pathway, stimulates glucose uptake in adipocytes, myotubes and hepatocytes and enhances insulin-stimulated glucose uptake. In a hepatoma cell line, reduces the expression of gluconeogenic enzymes G6PC1 and PCK1 and hence decreases de novo glucose production. This Mus musculus (Mouse) protein is Complement C1q-like protein 3 (C1ql3).